Consider the following 161-residue polypeptide: Fatty acid-binding protein homolog 2 (161 aa).

The signal sequence occupies residues 1–19; it reads MSSKFLILLAFCGATLVAA.

Belongs to the calycin superfamily. Fatty-acid binding protein (FABP) family.

Its subcellular location is the secreted. May play a role in sequestering potentially toxic fatty acids and their peroxidation products, or it may be involved in the maintenance of the impermeable lipid layer of the eggshell. This Caenorhabditis elegans protein is Fatty acid-binding protein homolog 2 (lbp-2).